Reading from the N-terminus, the 150-residue chain is D-aminoacyl-tRNA deacylase (150 aa).

A Gly-cisPro motif, important for rejection of L-amino acids motif is present at residues 136–137 (GP).

The protein belongs to the DTD family. In terms of assembly, homodimer.

It localises to the cytoplasm. It carries out the reaction glycyl-tRNA(Ala) + H2O = tRNA(Ala) + glycine + H(+). The catalysed reaction is a D-aminoacyl-tRNA + H2O = a tRNA + a D-alpha-amino acid + H(+). Its function is as follows. An aminoacyl-tRNA editing enzyme that deacylates mischarged D-aminoacyl-tRNAs. Also deacylates mischarged glycyl-tRNA(Ala), protecting cells against glycine mischarging by AlaRS. Acts via tRNA-based rather than protein-based catalysis; rejects L-amino acids rather than detecting D-amino acids in the active site. By recycling D-aminoacyl-tRNA to D-amino acids and free tRNA molecules, this enzyme counteracts the toxicity associated with the formation of D-aminoacyl-tRNA entities in vivo and helps enforce protein L-homochirality. The protein is D-aminoacyl-tRNA deacylase of Staphylococcus aureus (strain Mu50 / ATCC 700699).